The primary structure comprises 306 residues: C-type lectin domain family 10 member A (306 aa).

The Cytoplasmic portion of the chain corresponds to 1–37 (MTMAYENFQNLGSEEKNQEAGKAPPQSFLCNILSWTH). A helical; Signal-anchor for type II membrane protein membrane pass occupies residues 38-58 (LLLFSLGLSLLLLVVISVIGS). The Extracellular segment spans residues 59–306 (QNSQLRRDLE…VCEMKLAKDS (248 aa)). N-linked (GlcNAc...) asparagine glycosylation is found at asparagine 76 and asparagine 168. Residues 174-300 (CCPLHWMEHE…QRPYRWVCEM (127 aa)) enclose the C-type lectin domain. 3 disulfides stabilise this stretch: cysteine 175–cysteine 186, cysteine 203–cysteine 298, and cysteine 276–cysteine 290.

In terms of assembly, homooligomer.

Its subcellular location is the membrane. In terms of biological role, recognizes terminal galactose and N-acetylgalactosamine units. The protein is C-type lectin domain family 10 member A (Clec10a) of Rattus norvegicus (Rat).